The following is a 186-amino-acid chain: Superoxide dismutase [Cu-Zn] (186 aa).

Residues 1–22 (MNMKTLLALAVSAVCSVSVAQA) form the signal peptide. H79, H81, and H104 together coordinate Cu cation. C86 and C182 are oxidised to a cystine. Zn(2+) is bound by residues H104, H113, H122, and D125. H160 provides a ligand contact to Cu cation.

Belongs to the Cu-Zn superoxide dismutase family. In terms of assembly, homodimer. Cu cation is required as a cofactor. The cofactor is Zn(2+).

The protein localises to the periplasm. It catalyses the reaction 2 superoxide + 2 H(+) = H2O2 + O2. Its function is as follows. Destroys radicals which are normally produced within the cells and which are toxic to biological systems. This Neisseria meningitidis serogroup A / serotype 4A (strain DSM 15465 / Z2491) protein is Superoxide dismutase [Cu-Zn] (sodC).